Reading from the N-terminus, the 432-residue chain is MSVITDIHAREVLDSRGNPTVEAEVYTELGGFGRAIVPSGASTGEHEAVELRDGDKSRFLGQGVLTAVENVNGEIAKAVIGLDVTDQRLIDQTMIDLDGTPNKGRLGANAMLAVSLASARAAADELGLPLYEYLGGPNAHVLPTPMMNVINGGKHADNNVDIQEFMIMPVGAKSLHEAVRMGAETFHTLKSLLQERGESTAVGDEGGFAPNLKNNEEPFEILVEAIQRAGYKPGQDISIAFDCAASEFYNKDTKKYVTVADGREYTAEEWTSLMEDIVDKYPVISIEDPLDENDWEGWKVFTERLGDKVQIVGDDLFVTNTNYLEKGIKMGVANSILIKLNQIGTLTETFEAIEMAKEAGYTAVVSHRSGETEDTTIADLVVATNAGQIKTGSMSRTDRIAKYNQLMRIEEALGSTAQYKGIHSFYNLHKQF.

Glutamine 163 provides a ligand contact to (2R)-2-phosphoglycerate. The Proton donor role is filled by glutamate 205. Residues aspartate 242, glutamate 287, and aspartate 314 each contribute to the Mg(2+) site. Lysine 339, arginine 368, serine 369, and lysine 390 together coordinate (2R)-2-phosphoglycerate. Catalysis depends on lysine 339, which acts as the Proton acceptor.

The protein belongs to the enolase family. Mg(2+) serves as cofactor.

Its subcellular location is the cytoplasm. The protein resides in the secreted. It localises to the cell surface. The enzyme catalyses (2R)-2-phosphoglycerate = phosphoenolpyruvate + H2O. It participates in carbohydrate degradation; glycolysis; pyruvate from D-glyceraldehyde 3-phosphate: step 4/5. Catalyzes the reversible conversion of 2-phosphoglycerate (2-PG) into phosphoenolpyruvate (PEP). It is essential for the degradation of carbohydrates via glycolysis. The sequence is that of Enolase 1 from Lactobacillus johnsonii (strain CNCM I-12250 / La1 / NCC 533).